The primary structure comprises 137 residues: Phosphoribosyl-AMP cyclohydrolase (137 aa).

Asp84 contributes to the Mg(2+) binding site. Zn(2+) is bound at residue Cys85. Mg(2+)-binding residues include Asp86 and Asp88. Zn(2+) contacts are provided by Cys101 and Cys108.

The protein belongs to the PRA-CH family. Homodimer. Requires Mg(2+) as cofactor. Zn(2+) serves as cofactor.

It localises to the cytoplasm. The enzyme catalyses 1-(5-phospho-beta-D-ribosyl)-5'-AMP + H2O = 1-(5-phospho-beta-D-ribosyl)-5-[(5-phospho-beta-D-ribosylamino)methylideneamino]imidazole-4-carboxamide. It participates in amino-acid biosynthesis; L-histidine biosynthesis; L-histidine from 5-phospho-alpha-D-ribose 1-diphosphate: step 3/9. Catalyzes the hydrolysis of the adenine ring of phosphoribosyl-AMP. This chain is Phosphoribosyl-AMP cyclohydrolase, found in Chlorobium phaeobacteroides (strain DSM 266 / SMG 266 / 2430).